Consider the following 862-residue polypeptide: Chaperone protein ClpB 1 (862 aa).

The Clp R domain occupies 5-147; sequence AEQFTEQAWA…KEAITAVRGN (143 aa). Repeat stretches follow at residues 8–72 and 84–147; these read FTEQ…LQRL and LGRS…VRGN. Residues 160–341 are NBD1; sequence ESLAKYGRDL…RRFQQVLVDQ (182 aa). Position 207–214 (207–214) interacts with ATP; that stretch reads GEPGVGKT. Residues 342-550 are linker; the sequence is PTVPDTISIL…IAEVIAKWTG (209 aa). A coiled-coil region spans residues 392-526; that stretch reads IDLVDESAAR…QEDLLEDEDG (135 aa). Positions 560–771 are NBD2; sequence EMEKLLQLED…RLDDQIIFRS (212 aa). 610–617 contacts ATP; the sequence is GPTGVGKT. Residues 772-862 are C-terminal; it reads LEKEELRRIV…DAGDDKLSIS (91 aa).

The protein belongs to the ClpA/ClpB family. Homohexamer. The oligomerization is ATP-dependent.

The protein localises to the cytoplasm. Functionally, part of a stress-induced multi-chaperone system, it is involved in the recovery of the cell from heat-induced damage, in cooperation with DnaK, DnaJ and GrpE. Acts before DnaK, in the processing of protein aggregates. Protein binding stimulates the ATPase activity; ATP hydrolysis unfolds the denatured protein aggregates, which probably helps expose new hydrophobic binding sites on the surface of ClpB-bound aggregates, contributing to the solubilization and refolding of denatured protein aggregates by DnaK. The polypeptide is Chaperone protein ClpB 1 (clpB1) (Parasynechococcus marenigrum (strain WH8102)).